Here is a 523-residue protein sequence, read N- to C-terminus: Lysine-specific demethylase 4D (523 aa).

Residues Ile-18–Arg-60 form the JmjN domain. A polyADP-ribosyl glutamic acid mark is found at Glu-26 and Glu-27. Tyr-136 contacts 2-oxoglutarate. The region spanning Asp-146 to Cys-312 is the JmjC domain. Residues His-192 and Glu-194 each coordinate Fe cation. 2-oxoglutarate-binding residues include Asn-202 and Lys-210. Residues Cys-238 and His-244 each coordinate Zn(2+). 2-oxoglutarate is bound at residue Lys-245. Residue His-280 participates in Fe cation binding. 2 residues coordinate Zn(2+): Cys-310 and Cys-312. The tract at residues Arg-407–Pro-523 is disordered. Residues Lys-428–Ser-440 show a composition bias toward low complexity. The segment covering Asn-448–Gln-458 has biased composition (basic residues).

The protein belongs to the JHDM3 histone demethylase family. Fe(2+) is required as a cofactor. In terms of processing, ubiquitinated via 'Lys-63'-linked ubiquitin chains. Deubiquitinated by USP14 with the help of TRIM14 leading to stabilization.

Its subcellular location is the nucleus. It catalyses the reaction N(6),N(6),N(6)-trimethyl-L-lysyl(9)-[histone H3] + 2 2-oxoglutarate + 2 O2 = N(6)-methyl-L-lysyl(9)-[histone H3] + 2 formaldehyde + 2 succinate + 2 CO2. In terms of biological role, histone demethylase that specifically demethylates 'Lys-9' of histone H3, thereby playing a central role in histone code. Does not demethylate histone H3 'Lys-4', H3 'Lys-27', H3 'Lys-36' nor H4 'Lys-20'. Demethylates both di- and trimethylated H3 'Lys-9' residue, while it has no activity on monomethylated residues. Demethylation of Lys residue generates formaldehyde and succinate. This chain is Lysine-specific demethylase 4D (KDM4D), found in Homo sapiens (Human).